The primary structure comprises 575 residues: MNTKGKVVGVNGNLVTIEVEGSVSMNEVLFVKTAGRNLKAEVIRIRGNEVDAQVFELTKGISVGDLVEFTDKLLTVELGPGLLTQVYDGLQNPLPELAIQCGFFLERGVYLRPLNKDKKWNFKKTSKVGDIVIAGDFLGFVIEGTVHHQIMIPFYKRDSYKIVEIVSDGDYSIDEQIAVIEDDSGMRHNITMSFHWPVKVPITNYKERLIPSEPMLTQTRIIDTFFPVAKGGTFCIPGPFGAGKTVLQQVTSRNADVDVVIIAACGERAGEVVETLKEFPELMDPKTGKSLMDRTCIICNTSSMPVAAREASVYTAITIGEYYRQMGLDILLLADSTSRWAQAMREMSGRLEEIPGEEAFPAYLESVIASFYERAGIVVLNNGDIGSVTVGGSVSPAGGNFEEPVTQATLKVVGAFHGLTRERSDARKFPAISPLESWSKYKGVIDQKKTEYARSFLVKGNEINQMMKVVGEEGISNDDFLIYLKSELLDSCYLQQNSFDSIDAAVSSERQNYMFDIVYNILKTNFEFSDKLQARDFINELRQNLLDMNLSSFKDHKFNKLEHALGELINFKKVI.

238 to 245 is a binding site for ATP; it reads GPFGAGKT.

It belongs to the ATPase alpha/beta chains family.

The catalysed reaction is ATP + H2O + 4 H(+)(in) = ADP + phosphate + 5 H(+)(out). Functionally, produces ATP from ADP in the presence of a proton gradient across the membrane. The V-type alpha chain is a catalytic subunit. The chain is V-type ATP synthase alpha chain (atpA) from Borreliella burgdorferi (strain ATCC 35210 / DSM 4680 / CIP 102532 / B31) (Borrelia burgdorferi).